Consider the following 173-residue polypeptide: T-cell receptor beta-2 chain C region (173 aa).

The tract at residues Glu-1–Glu-146 is c region. 2 N-linked (GlcNAc...) asparagine glycosylation sites follow: Asn-67 and Asn-116. Residues Ile-147 to Val-168 traverse the membrane as a helical segment. Over Lys-169–Ser-173 the chain is Cytoplasmic.

The protein resides in the membrane. This Mus musculus (Mouse) protein is T-cell receptor beta-2 chain C region.